The primary structure comprises 128 residues: Flagellar basal body rod protein FlgB (128 aa).

Belongs to the flagella basal body rod proteins family. The basal body constitutes a major portion of the flagellar organelle and consists of a number of rings mounted on a central rod. In Gram-negative bacteria, at least four rings, L, P, S and M are present, whereas Gram-positive bacteria lack the L and P rings. The rod consists of about 26 subunits of FlgG in the distal portion, and FlgB, FlgC and FlgF build up the proximal portion of the rod with about 6 subunits each. Rod assembly occurs by export via the flagellum-specific pathway of its constituent proteins and by their incorporation into the rod structure in the probable order of FlgB, FlgC, FlgF and FlgG. Another protein, FliE, also assembles onto the stable rod structure.

The protein localises to the bacterial flagellum basal body. Structural component of flagellum, the bacterial motility apparatus. Part of the rod structure of flagellar basal body. In Cereibacter sphaeroides (strain ATCC 17029 / ATH 2.4.9) (Rhodobacter sphaeroides), this protein is Flagellar basal body rod protein FlgB.